The primary structure comprises 482 residues: MEVVRYFTRNQKQLPATGPNDSIVQLPDIPPCYECNVEVALRFDSSLDSEKLQQSLKQLLEIGNWRQLGGRVRRRDTNPSACNYDLHVPAEFTTERPAFNYQIWELSGAIDEHPTASKMPRPTDPKKVSFYNVGDARSPLRTRTRYPRKAQEWADSDLPPLSFEQLSFRDGTIILLVFPHILMDATGYGLFLKAWTSVLQGRIDHVPQCCGFSESTTDMLGHKTPAGAFTWHNHLLKGLDSLKFTAGLLWENRWGKEDRVIRVPAKFIMHTRDKVLADLSTSQPSPFVSQSDVLIAWFTRVVLAALKPLQRRTLVLTNAFDTRHMLPPERAYLQNSVCMAHTMLPVGEVLYNPVSFLANEIRRSLVRERTEEQIQARCAWAKDVGIMPLLGTSDMLLCNVSNWSKGNLVDLDLCHAAVTEHRGPCVPSSILNCSQMGGVTPNYGIILGKDSQDCWWMQWHLPKFCWAGIERELDTINQIRWE.

Catalysis depends on proton acceptor residues H180 and D412.

Belongs to the plant acyltransferase family. Monomer.

Its pathway is secondary metabolite biosynthesis; terpenoid biosynthesis. Functionally, O-acyltransferase; part of the gene cluster B that mediates the biosynthesis of the fungal meroterpenoid acetoxydehydroaustin. The first step of the pathway is the synthesis of 3,5-dimethylorsellinic acid by the polyketide synthase ausA. 3,5-dimethylorsellinic acid is then prenylated by the polyprenyl transferase ausN. Further epoxidation by the FAD-dependent monooxygenase ausM and cyclization by the probable terpene cyclase ausL lead to the formation of protoaustinoid A. Protoaustinoid A is then oxidized to spiro-lactone preaustinoid A3 by the combined action of the FAD-binding monooxygenases ausB and ausC, and the dioxygenase ausE. Acid-catalyzed keto-rearrangement and ring contraction of the tetraketide portion of preaustinoid A3 by ausJ lead to the formation of preaustinoid A4. The aldo-keto reductase ausK, with the help of ausH, is involved in the next step by transforming preaustinoid A4 into isoaustinone which is in turn hydroxylated by the P450 monooxygenase ausI to form austinolide. The cytochrome P450 monooxygenase ausG then modifies austinolide to austinol. Austinol is further acetylated to austin by the O-acetyltransferase ausP, which spontaneously changes to dehydroaustin. The cytochrome P450 monooxygenase then converts dehydroaustin is into 7-dehydrodehydroaustin. The hydroxylation catalyzed by ausR permits the second O-acetyltransferase ausQ to add an additional acetyl group to the molecule, leading to the formation of acetoxydehydroaustin. Due to genetic rearrangements of the clusters and the subsequent loss of some enzymes, the end product of the Penicillium brasilianum austinoid biosynthesis clusters is acetoxydehydroaustin. In Penicillium brasilianum, this protein is O-acyltransferase ausP.